The sequence spans 122 residues: Large ribosomal subunit protein uL14 (122 aa).

The protein belongs to the universal ribosomal protein uL14 family. As to quaternary structure, part of the 50S ribosomal subunit. Forms a cluster with proteins L3 and L19. In the 70S ribosome, L14 and L19 interact and together make contacts with the 16S rRNA in bridges B5 and B8.

Functionally, binds to 23S rRNA. Forms part of two intersubunit bridges in the 70S ribosome. This is Large ribosomal subunit protein uL14 from Lactobacillus acidophilus (strain ATCC 700396 / NCK56 / N2 / NCFM).